We begin with the raw amino-acid sequence, 428 residues long: Light-independent protochlorophyllide reductase subunit N (428 aa).

Positions 30, 55, and 116 each coordinate [4Fe-4S] cluster.

This sequence belongs to the BchN/ChlN family. As to quaternary structure, protochlorophyllide reductase is composed of three subunits; BchL, BchN and BchB. Forms a heterotetramer of two BchB and two BchN subunits. [4Fe-4S] cluster is required as a cofactor.

The enzyme catalyses chlorophyllide a + oxidized 2[4Fe-4S]-[ferredoxin] + 2 ADP + 2 phosphate = protochlorophyllide a + reduced 2[4Fe-4S]-[ferredoxin] + 2 ATP + 2 H2O. The protein operates within porphyrin-containing compound metabolism; bacteriochlorophyll biosynthesis (light-independent). Its function is as follows. Component of the dark-operative protochlorophyllide reductase (DPOR) that uses Mg-ATP and reduced ferredoxin to reduce ring D of protochlorophyllide (Pchlide) to form chlorophyllide a (Chlide). This reaction is light-independent. The NB-protein (BchN-BchB) is the catalytic component of the complex. This chain is Light-independent protochlorophyllide reductase subunit N, found in Bradyrhizobium sp. (strain BTAi1 / ATCC BAA-1182).